We begin with the raw amino-acid sequence, 320 residues long: Olfactory receptor 5C1 (320 aa).

Residues Met1–Val29 are Extracellular-facing. Residue Asn5 is glycosylated (N-linked (GlcNAc...) asparagine). A helical membrane pass occupies residues Ala30 to Ala50. Topologically, residues Leu51–Arg58 are cytoplasmic. A helical transmembrane segment spans residues Leu59 to Ser79. Over Ala80–Leu103 the chain is Extracellular. Cys101 and Cys193 are disulfide-bonded. Residues Gln104–Tyr124 traverse the membrane as a helical segment. The Cytoplasmic segment spans residues Asp125–Arg143. Residues Leu144–Thr164 form a helical membrane-spanning segment. Residues Thr165–Glu200 are Extracellular-facing. A helical membrane pass occupies residues Leu201–Ser221. The Cytoplasmic portion of the chain corresponds to Tyr222–Ala241. A helical transmembrane segment spans residues Ala242–Met262. Over Tyr263–Asp275 the chain is Extracellular. A helical membrane pass occupies residues Lys276–Leu296. Topologically, residues Arg297–Gln320 are cytoplasmic.

Belongs to the G-protein coupled receptor 1 family.

It localises to the cell membrane. Odorant receptor. The polypeptide is Olfactory receptor 5C1 (OR5C1) (Homo sapiens (Human)).